Reading from the N-terminus, the 422-residue chain is Beclin-1-like protein (422 aa).

Residues 119 to 243 (MLEIMDRELR…KQQLDKLRDT (125 aa)) adopt a coiled-coil conformation. A disordered region spans residues 182–201 (QSLNDAIAEEEQEREELHEQ).

The protein belongs to the beclin family. Interacts with Rab18, preferentially binding to the GTP-bound form.

Functionally, plays a central role in autophagy. This is Beclin-1-like protein from Drosophila melanogaster (Fruit fly).